The following is a 298-amino-acid chain: Ethanolamine ammonia-lyase small subunit (298 aa).

Adenosylcob(III)alamin-binding residues include Val-210, Glu-231, and Cys-261.

It belongs to the EutC family. As to quaternary structure, the basic unit is a heterodimer which dimerizes to form tetramers. The heterotetramers trimerize; 6 large subunits form a core ring with 6 small subunits projecting outwards. It depends on adenosylcob(III)alamin as a cofactor.

It localises to the bacterial microcompartment. It catalyses the reaction ethanolamine = acetaldehyde + NH4(+). Its pathway is amine and polyamine degradation; ethanolamine degradation. In terms of biological role, catalyzes the deamination of various vicinal amino-alcohols to oxo compounds. Allows this organism to utilize ethanolamine as the sole source of nitrogen and carbon in the presence of external vitamin B12. In Salmonella heidelberg (strain SL476), this protein is Ethanolamine ammonia-lyase small subunit.